A 1479-amino-acid polypeptide reads, in one-letter code: Protein CHROMATIN REMODELING 20 (1479 aa).

The stretch at 19–49 forms a coiled coil; the sequence is EVIVESKEDEMDIIIEENREAEQEVMEVKAR. Positions 40 to 55 are enriched in basic and acidic residues; the sequence is EQEVMEVKARDGRGEQ. Residues 40-109 are disordered; the sequence is EQEVMEVKAR…DELDLEKPLS (70 aa). Residues 76-86 show a composition bias toward low complexity; that stretch reads DASSRSESSDF. The span at 94–109 shows a compositional bias: basic and acidic residues; sequence ILSRRDDELDLEKPLS. Residues 109–199 are a coiled coil; sequence SEEEIDELIS…EQLDGAGIEL (91 aa). Residues 472–601 enclose the ADD domain; it reads RDDSQNPANN…KKSIELSSDS (130 aa). The segment at 483–514 adopts a GATA-type; atypical zinc-finger fold; the sequence is RCTACNKVAVEVHSHPLLEVIVCMDCKRSIED. Residues 524–577 form a PHD-type; atypical zinc finger; the sequence is ERHCEWCGHIADLIDCRTCEKLFCASCIKRNIGEEYMSEAQSSGWDCCCCSPIP. Positions 578–598 form a coiled coil; it reads LQRLTLELEKAMRDKKSIELS. The segment at 594 to 615 is disordered; the sequence is SIELSSDSSSDSSSDNNSVDTD. The span at 598–615 shows a compositional bias: low complexity; it reads SSDSSSDSSSDNNSVDTD. The region spanning 741 to 924 is the Helicase ATP-binding domain; sequence VKSGDKGLGC…YCMVDFVREG (184 aa). 754–761 provides a ligand contact to ATP; that stretch reads HTMGLGKT. The short motif at 875-878 is the DEAH box element; sequence DEAH. The Helicase C-terminal domain occupies 1122–1290; sequence DILSMSADVG…QVHRTISKEE (169 aa). Positions 1400–1423 are disordered; sequence SESPVVPKPSPSTQTEPLPQPKGF.

It belongs to the SNF2/RAD54 helicase family.

Its subcellular location is the nucleus. The protein localises to the chromosome. It localises to the telomere. Its function is as follows. Involved in transcriptional regulation and chromatin remodeling. Facilitates DNA replication in multiple cellular environments and is required for efficient replication of a subset of genomic loci. Binds to DNA tandem repeat sequences in both telomeres and euchromatin and in vitro binds DNA quadruplex structures. May help stabilizing G-rich regions into regular chromatin structures by remodeling G4 DNA and incorporating H3.3-containing nucleosomes. Involved in DNA repair of gamma-irradiation-mediated damages. This Arabidopsis thaliana (Mouse-ear cress) protein is Protein CHROMATIN REMODELING 20.